Reading from the N-terminus, the 341-residue chain is Anthranilate phosphoribosyltransferase (341 aa).

5-phospho-alpha-D-ribose 1-diphosphate is bound by residues Gly-79, 82–83, Thr-87, 89–92, 107–115, and Ser-119; these read GD, NIST, and KHGNRAVSS. Gly-79 is a binding site for anthranilate. Ser-91 serves as a coordination point for Mg(2+). An anthranilate-binding site is contributed by Asn-110. Anthranilate is bound at residue Arg-165. Mg(2+) is bound by residues Asp-224 and Glu-225.

This sequence belongs to the anthranilate phosphoribosyltransferase family. Homodimer. Mg(2+) serves as cofactor.

The enzyme catalyses N-(5-phospho-beta-D-ribosyl)anthranilate + diphosphate = 5-phospho-alpha-D-ribose 1-diphosphate + anthranilate. The protein operates within amino-acid biosynthesis; L-tryptophan biosynthesis; L-tryptophan from chorismate: step 2/5. Catalyzes the transfer of the phosphoribosyl group of 5-phosphorylribose-1-pyrophosphate (PRPP) to anthranilate to yield N-(5'-phosphoribosyl)-anthranilate (PRA). The sequence is that of Anthranilate phosphoribosyltransferase from Bacillus cereus (strain ATCC 14579 / DSM 31 / CCUG 7414 / JCM 2152 / NBRC 15305 / NCIMB 9373 / NCTC 2599 / NRRL B-3711).